We begin with the raw amino-acid sequence, 291 residues long: Probable cell wall amidase LytH (291 aa).

The signal sequence occupies residues 1-40 (MKKIDSWLTKHGLKNRLTLVVIVIFIIFLILLFMFVNLSD). The region spanning 41–105 (EDTGQITITE…WVAGWHTNLN (65 aa)) is the SH3b domain. A MurNAc-LAA domain is found at 122 to 286 (IVLDPGHGGS…VEQAIVDGLK (165 aa)). Residues 123-147 (VLDPGHGGSDQGASSSTPSKSLEKN) form a disordered region. Residues 133 to 142 (QGASSSTPSK) show a composition bias toward polar residues.

It belongs to the N-acetylmuramoyl-L-alanine amidase 3 family.

It is found in the secreted. Its function is as follows. Probably involved in cell-wall metabolism. The polypeptide is Probable cell wall amidase LytH (lytH) (Staphylococcus epidermidis (strain ATCC 12228 / FDA PCI 1200)).